We begin with the raw amino-acid sequence, 39 residues long: L-amino-acid oxidase (39 aa).

Belongs to the flavin monoamine oxidase family. FIG1 subfamily. In terms of assembly, monomer. This is in contrast with most of its orthologs, that are non-covalently linked homodimers. FAD is required as a cofactor. N-glycosylated. Expressed by the venom gland.

It is found in the secreted. The catalysed reaction is an L-alpha-amino acid + O2 + H2O = a 2-oxocarboxylate + H2O2 + NH4(+). It carries out the reaction L-leucine + O2 + H2O = 4-methyl-2-oxopentanoate + H2O2 + NH4(+). In terms of biological role, catalyzes an oxidative deamination of predominantly hydrophobic and aromatic L-amino acids, thus producing hydrogen peroxide that may contribute to the diverse toxic effects of this enzyme. Shows activity on L-Leu. Exhibits diverse biological activities, such as hemorrhage, hemolysis, edema, apoptosis of vascular endothelial cells or tumor cell lines, and antiparasitic activities, as well as regulation of platelet aggregation. Effects of snake L-amino oxidases on platelets are controversial, since they either induce aggregation or inhibit agonist-induced aggregation. These different effects are probably due to different experimental conditions. In addition, this protein inhibits dose-dependently the growth of Gram-positive, Gram-negative bacteria and yeast, probably by the generation of hydrogen peroxide. This is L-amino-acid oxidase from Bothrops marajoensis (Marajo lancehead).